Reading from the N-terminus, the 856-residue chain is Probable alpha,alpha-trehalose-phosphate synthase [UDP-forming] 8 (856 aa).

Serine 5 carries the post-translational modification Phosphoserine. Threonine 32 carries the post-translational modification Phosphothreonine. A glycosyltransferase region spans residues 57 to 541 (ERKIIVANML…AKSFMQDLER (485 aa)).

It in the N-terminal section; belongs to the glycosyltransferase 20 family. This sequence in the C-terminal section; belongs to the trehalose phosphatase family. As to expression, expressed in leaves, roots, stems and flowers.

It catalyses the reaction D-glucose 6-phosphate + UDP-alpha-D-glucose = alpha,alpha-trehalose 6-phosphate + UDP + H(+). This is Probable alpha,alpha-trehalose-phosphate synthase [UDP-forming] 8 (TPS8) from Arabidopsis thaliana (Mouse-ear cress).